A 353-amino-acid polypeptide reads, in one-letter code: S-adenosylmethionine:tRNA ribosyltransferase-isomerase (353 aa).

It belongs to the QueA family. Monomer.

The protein localises to the cytoplasm. It carries out the reaction 7-aminomethyl-7-carbaguanosine(34) in tRNA + S-adenosyl-L-methionine = epoxyqueuosine(34) in tRNA + adenine + L-methionine + 2 H(+). It functions in the pathway tRNA modification; tRNA-queuosine biosynthesis. In terms of biological role, transfers and isomerizes the ribose moiety from AdoMet to the 7-aminomethyl group of 7-deazaguanine (preQ1-tRNA) to give epoxyqueuosine (oQ-tRNA). The protein is S-adenosylmethionine:tRNA ribosyltransferase-isomerase of Nitrosomonas europaea (strain ATCC 19718 / CIP 103999 / KCTC 2705 / NBRC 14298).